The sequence spans 141 residues: HTH-type transcriptional regulator MntR (141 aa).

Residues 1–63 (MPTPSMEDYI…YEKYRGLVLT (63 aa)) form the HTH dtxR-type domain. Asp8, Glu11, His77, Glu99, Glu102, and His103 together coordinate Mn(2+).

The protein belongs to the DtxR/MntR family. In terms of assembly, homodimer.

It localises to the cytoplasm. DNA binding is strongly activated by Mn(2+). Functionally, central regulator of manganese homeostasis. In Geobacillus thermodenitrificans (strain NG80-2), this protein is HTH-type transcriptional regulator MntR.